Consider the following 487-residue polypeptide: ATP-dependent rRNA helicase RRP3 (487 aa).

Residues 22 to 67 form a disordered region; sequence IKRKALEKQQQAHANEPSPSDEDSAQSNSKDSNSNEQPEESEEIFE. Residues 67–95 carry the Q motif motif; that stretch reads ESFTELDLVPELIEACKNLNYNKPTPIQS. The region spanning 98–270 is the Helicase ATP-binding domain; it reads IPPALKGSDI…RASLTNPVKC (173 aa). 111-118 is an ATP binding site; it reads AQTGSGKT. The short motif at 217–220 is the DEAD box element; it reads DEAD. The Helicase C-terminal domain occupies 298–442; it reads LIYLLNEFIG…ENVDKDAILA (145 aa). Residues 459–487 are disordered; it reads NRRNKEKQARGKGRRGRMATRDNMDREER. Over residues 477 to 487 the composition is skewed to basic and acidic residues; it reads ATRDNMDREER.

The protein belongs to the DEAD box helicase family. DDX47/RRP3 subfamily. In terms of assembly, interacts with the SSU processome.

It is found in the nucleus. The enzyme catalyses ATP + H2O = ADP + phosphate + H(+). Functionally, ATP-dependent rRNA helicase required for pre-ribosomal RNA processing. Involved in the maturation of the 35S-pre-rRNA and to its cleavage to mature 18S rRNA. This is ATP-dependent rRNA helicase RRP3 from Kluyveromyces lactis (strain ATCC 8585 / CBS 2359 / DSM 70799 / NBRC 1267 / NRRL Y-1140 / WM37) (Yeast).